We begin with the raw amino-acid sequence, 886 residues long: Valine--tRNA ligase (886 aa).

A 'HIGH' region motif is present at residues Pro43–His53. Residues Lys528 to Ser532 carry the 'KMSKS' region motif. Lys531 serves as a coordination point for ATP.

The protein belongs to the class-I aminoacyl-tRNA synthetase family. ValS type 2 subfamily.

The protein resides in the cytoplasm. It carries out the reaction tRNA(Val) + L-valine + ATP = L-valyl-tRNA(Val) + AMP + diphosphate. Functionally, catalyzes the attachment of valine to tRNA(Val). As ValRS can inadvertently accommodate and process structurally similar amino acids such as threonine, to avoid such errors, it has a 'posttransfer' editing activity that hydrolyzes mischarged Thr-tRNA(Val) in a tRNA-dependent manner. This is Valine--tRNA ligase from Methanococcus maripaludis (strain DSM 14266 / JCM 13030 / NBRC 101832 / S2 / LL).